Here is a 111-residue protein sequence, read N- to C-terminus: MGSSSFLVLTVSLALVTLVAAEGVKGGIEKAGVCPADNVRCFKSDPPQCHTDQDCLGARKCCYLHCGFKCVIPVKKLEEGGNKDEDVSGPCPEPGWEAKSPGSSSTGCPQK.

The first 23 residues, 1-23, serve as a signal peptide directing secretion; it reads MGSSSFLVLTVSLALVTLVAAEG. Residues 27–74 form the WAP domain; it reads GIEKAGVCPADNVRCFKSDPPQCHTDQDCLGARKCCYLHCGFKCVIPV. Intrachain disulfides connect Cys34-Cys62, Cys41-Cys66, Cys49-Cys61, and Cys55-Cys70. The interval 80 to 111 is disordered; that stretch reads GGNKDEDVSGPCPEPGWEAKSPGSSSTGCPQK. Residues 101 to 111 are compositionally biased toward polar residues; the sequence is PGSSSTGCPQK.

The protein localises to the secreted. Antibacterial protein. Putative acid-stable proteinase inhibitor. This chain is WAP four-disulfide core domain protein 12 (WFDC12), found in Papio anubis (Olive baboon).